The following is a 314-amino-acid chain: 1,4-dihydroxy-2-naphthoyl-CoA synthase (314 aa).

Substrate-binding positions include R58, 103–107 (SGGDQ), Y115, 157–161 (WAAGG), T184, S190, Y287, and K302.

Belongs to the enoyl-CoA hydratase/isomerase family. MenB subfamily.

The enzyme catalyses 2-succinylbenzoyl-CoA + H(+) = 1,4-dihydroxy-2-naphthoyl-CoA + H2O. It functions in the pathway quinol/quinone metabolism; 1,4-dihydroxy-2-naphthoate biosynthesis; 1,4-dihydroxy-2-naphthoate from chorismate: step 6/7. Its pathway is quinol/quinone metabolism; menaquinone biosynthesis. Functionally, converts o-succinylbenzoyl-CoA (OSB-CoA) to 1,4-dihydroxy-2-naphthoyl-CoA (DHNA-CoA). The sequence is that of 1,4-dihydroxy-2-naphthoyl-CoA synthase from Mycobacterium tuberculosis (strain CDC 1551 / Oshkosh).